Reading from the N-terminus, the 367-residue chain is MMKWSIVKRIPVYGGSFISMKHMMLVPADLSWSCSFSGMHSLINTGEEDEEELLKKIVNHSESGSKIISKIDYTNLVEKFTRDGNLSGAYDLLQSLQEKNICLPISVFKNLLAAAGELNDMKLSCRVFREVLILPGKEPLSSDCYLNLARAFINTDDCTYLTSLLKEISESSLPYRLIVMNRIIFAFAETRQIDKVLMILKEMKEWECKPDVITYNSVLDILGRAGLVNEILGVLSTMKEDCSVSVNIITYNTVLNGMRKACRFDMCLVIYNEMVQCGIEPDLLSYTAVIDSLGRSGNVKESLRLFDEMKQRQIRPSVYVYRALIDCLKKSGDFQSALQLSDELKNTSSLDLAGPQDFKRHLRSHRR.

PPR repeat units lie at residues 69 to 103 (SKIDYTNLVEKFTRDGNLSGAYDLLQSLQEKNICL), 104 to 139 (PISVFKNLLAAAGELNDMKLSCRVFREVLILPGKEP), 141 to 175 (SSDCYLNLARAFINTDDCTYLTSLLKEISESSLPY), 176 to 210 (RLIVMNRIIFAFAETRQIDKVLMILKEMKEWECKP), 211 to 241 (DVITYNSVLDILGRAGLVNEILGVLSTMKED), 247 to 281 (NIITYNTVLNGMRKACRFDMCLVIYNEMVQCGIEP), 282 to 316 (DLLSYTAVIDSLGRSGNVKESLRLFDEMKQRQIRP), and 317 to 347 (SVYVYRALIDCLKKSGDFQSALQLSDELKNT).

This sequence belongs to the PPR family. P subfamily.

This Arabidopsis thaliana (Mouse-ear cress) protein is Pentatricopeptide repeat-containing protein At1g11900.